Reading from the N-terminus, the 415-residue chain is Beta-1,4-glucuronyltransferase 1 (415 aa).

The Cytoplasmic portion of the chain corresponds to 1–8; it reads MQMSYAIR. Residues 9–36 traverse the membrane as a helical; Signal-anchor for type II membrane protein segment; sequence CAFYQLLLAALMLVAMLQLLYLSLLSGL. At 37-415 the chain is on the lumenal side; the sequence is HGQEEQDQYF…AKYPNSPRRC (379 aa). Residue Asn204 is glycosylated (N-linked (GlcNAc...) asparagine). 2 residues coordinate Mn(2+): Asp227 and Asp229. An N-linked (GlcNAc...) asparagine glycan is attached at Asn300.

The protein belongs to the glycosyltransferase 49 family. In terms of assembly, interacts with LARGE1 and LARGE2. Mn(2+) serves as cofactor.

The protein resides in the golgi apparatus membrane. The catalysed reaction is 3-O-[beta-D-Xyl-(1-&gt;4)-Rib-ol-P-Rib-ol-P-3-beta-D-GalNAc-(1-&gt;3)-beta-D-GlcNAc-(1-&gt;4)-(O-6-P-alpha-D-Man)]-Thr-[protein] + UDP-alpha-D-glucuronate = 3-O-[beta-D-GlcA-(1-&gt;3)-beta-D-Xyl-(1-&gt;4)-Rib-ol-P-Rib-ol-P-3-beta-D-GalNAc-(1-&gt;3)-beta-D-GlcNAc-(1-&gt;4)-(O-6-P-alpha-D-Man)]-Thr-[protein] + UDP + H(+). It participates in protein modification; protein glycosylation. In terms of biological role, beta-1,4-glucuronyltransferase involved in O-mannosylation of alpha-dystroglycan (DAG1). Transfers a glucuronic acid (GlcA) residue onto a xylose (Xyl) acceptor to produce the glucuronyl-beta-1,4-xylose-beta disaccharide primer, which is further elongated by LARGE1, during synthesis of phosphorylated O-mannosyl glycan. Phosphorylated O-mannosyl glycan is a carbohydrate structure present in alpha-dystroglycan (DAG1), which is required for binding laminin G-like domain-containing extracellular proteins with high affinity. Required for axon guidance; via its function in O-mannosylation of alpha-dystroglycan (DAG1). The protein is Beta-1,4-glucuronyltransferase 1 of Pongo abelii (Sumatran orangutan).